The sequence spans 189 residues: UPF0301 protein HRM2_24640 (189 aa).

This sequence belongs to the UPF0301 (AlgH) family.

This chain is UPF0301 protein HRM2_24640, found in Desulforapulum autotrophicum (strain ATCC 43914 / DSM 3382 / VKM B-1955 / HRM2) (Desulfobacterium autotrophicum).